The sequence spans 443 residues: C4-dicarboxylate transport protein (443 aa).

The next 9 membrane-spanning stretches (helical) occupy residues 17–37 (PFYS…ILLG), 57–77 (LVKM…IAGM), 92–112 (LYFL…ANVV), 139–159 (EQSI…GAFA), 161–181 (GDIL…AMVG), 201–221 (LVGI…AFTI), 234–254 (MLIG…LGAV), 320–340 (IYMT…LSWG), and 368–388 (AATL…ILGI).

The protein belongs to the dicarboxylate/amino acid:cation symporter (DAACS) (TC 2.A.23) family.

It localises to the cell inner membrane. Its function is as follows. Responsible for the transport of dicarboxylates such as succinate, fumarate, and malate from the periplasm across the membrane. The protein is C4-dicarboxylate transport protein of Rhizobium etli (strain ATCC 51251 / DSM 11541 / JCM 21823 / NBRC 15573 / CFN 42).